A 100-amino-acid chain; its full sequence is uncharacterized protein (100 aa).

Residues 65–96 (PELSKNWEKLKKEIEQKHKEIQELISEFDNMF) adopt a coiled-coil conformation.

This is an uncharacterized protein from Acidianus filamentous virus 2 (isolate Italy/Pozzuoli) (AFV-2).